A 536-amino-acid polypeptide reads, in one-letter code: L-aspartate oxidase 2 (536 aa).

FAD is bound by residues 22–25 (EGLA) and 51–58 (SSYWAQGG). The active-site Proton donor/acceptor is Arg284. FAD contacts are provided by residues Glu369 and 385–386 (SL).

It belongs to the FAD-dependent oxidoreductase 2 family. NadB subfamily. The cofactor is FAD.

Its subcellular location is the cytoplasm. The enzyme catalyses L-aspartate + O2 = iminosuccinate + H2O2. It functions in the pathway cofactor biosynthesis; NAD(+) biosynthesis; iminoaspartate from L-aspartate (oxidase route): step 1/1. Catalyzes the oxidation of L-aspartate to iminoaspartate, the first step in the de novo biosynthesis of NAD(+). The polypeptide is L-aspartate oxidase 2 (nadB2) (Ralstonia nicotianae (strain ATCC BAA-1114 / GMI1000) (Ralstonia solanacearum)).